The primary structure comprises 2304 residues: MGFTCPNSDCLYSRSEWSNRALREEGLSFSMRCPGACCGAMLVRKQQEPEAVDQRHSPERVRIAPHQNVCAGLPGVGPSKCPKHSQVPLAPKSKSVPARATVSASPLKKQHCDVVVTVGPPADLELVYPALVSKGSANPPKVGKKSFNEALLEKRAAYQVRTAVPPPGPIRVVKTAATPVKVEKVRFPKGAVAFNGANFIDAKGYVVLSAGALKILRGVQKLRRQQARSARRMAACRRVRLAVFAARLPSLLRKADEATSGGFKYVDLNAPRVVRKAEKRPKKKPAKKAVRPASPVEEEINWDDFIIPESERTASPMKEEKPKRSLVPNSLGFGWWRPASGNLWDVVSQCQRACEGTFLEASAEACLVRAGVDDVALSVWARISKSVVQLSAYYDVNTLLENYTALSECTMDELQSVAVQLDSEYQELGPPTHFTCGLSNWARGAGKILYNFVAPTVEGIAGAGCRIVERAYELSKTVIDEIFSKMKSLFYDCFGNLFGHLNVLLSTIDSFWARASTWIMNILEKTHDCLKVLRDSAVWSLLLILVGGLILLSERFLQSIGIISKPGTILGIFLATFLGIFGYTFFRKDDTLVSDLLCAFKIAITNLFRTKPGPPGSPIIVDGDVVIPESAVAMSTCSFMGGLDIAIAAIGNVGASILGFKVGALQYAAKIATCLDQLRKGKDVLKEMTCWIIETLGALWNKMTGREATFFDEVSAIVAVDIREWLEESQNLCLAAQTFSIGDKIVLEQCERLIADGHKLLRGMGDADRKLSSSFLSTVQRKVSDLEKIHTQSVRAGYFEGRRMEPFWVYIHGPSHCGKSLLMEPMSRELLRAGGFSESSIYTKNSCDKYWSRYRRQACVQIDDLSAGKTDPSLESQLINLVASKEVPLDMAEVEDKGILFDSAILVTSSNTAHVPTNANVNHAEAYKNRMNVVIQCRRKPEYSPMGMELEGTFQPFDPRNPQASIECMLQHRETHAPITGWISAGAAMAEAVNQFRLHREKEMILQSNHLSSFRPAHPIYTECATFLSMYARDASFVPPVDLGCKWEIPSGYMTIAAVDGRVFGFSQLGVCTEISKQMKFTEEMEQYTLDKFAPDITKTMASQSRFKLVGAFLKGMIREEDNVVSLTSLGPKSTATQREFFETLGLAERVYLRAVQKKVNKIRTDPAFDVEALHARLLSTIATSYEYVRTYGPKIFPILMGFVCVVFACYGFIMPLLSFASGGSAVGGMVAMEQIAAASVVSSGSSPVAHRNRAPPVQPRYARHRLAGASAEDAYAYEEMMVVLYVDSTVAPVVNAVRGPGRQFFNSHQALMIPNNSTVVAHFSTRDVVEIHWEHDVVRKGEKKDTEIIQYRCPSIPELPSRCKKYFEYDLERDFPGPFTLDASCYRMQSPGKIDIELVSWTDHDRELRTRPLVIADPFGEDRYRREIPQYIQYGRPDQLHDCGAICVAKIGGQHRIVGLVISTDKHNTGVGLLPSALHMTTCSLSYVPEEWEEAPRGLKKLGWNDRSELPHMPRKTQYVAVNEDLAIPFDNPKIPSVLVSDDPRTVGTPVEGKDPVLVAMEKFYEPMTDFTEEEVRPGQTEVSLFEQVCDDIVQTWFDAGAEFEDVEDDVVINGDDDFDKLIMDTSEGYPYVLERTHGEKGKTRYFEGGPGAYTLKPGTSVYNDYHKLQEEVQVEGGIPEMVCIECPKDELLVERKVLQKLGTRNFEILELPKNMLFRKKFLHWALFLSDMRWCLPCQVGIVVQGREWGLLMDRLAAKNSVAYNCDYSKFDGLMSCQVLDAIGKMVNKCYSNANPNLKKKGKGELPGSPPQLARYNLLMSIFGRKCLARSQVFEVRGGIRRGALTVLLNSVFNEILIRYVYKTVIPSPEFNRFETFVTLVVYGDDNLIAVDPSMQKIFTGEVIKKTLARKKITITDGSDKLSPVLEAKPLAQLDFLKRSFLVSDSGQVMPALDRTCIYSSLLYLRSADCDPIPLLHQNVQNALQELYYRQDREEFDNLRTFYLERLPMWRNGQHRLLDWNQCAEHWRARYTGCPSDNPAGVLDMLVDPRCKSFMLPAGPANWSMPIADRIFVCGPKFSASGPSYTLCFNRLAAGETGVQIKPVHAATQGAMPTAKFVESFRSIKKRPELELAISAYESGSNLYFKGCAPYNDIWACAISFCSAFGYAQKQVLLHMYDNCKRLGASSLRSYFNKSLVGDGCARRCEIHTTPAIAKQVERLLPQVQCKHCEYDPEFASKPTTQLRKCTDPGVDGGKAMYIVRGLGRTAAKLVCSDICDGHLMSCNTSFDKMVVNLFRRSCFKCL.

The Cytoplasmic segment spans residues 588–1195; it reads KDDTLVSDLL…YEYVRTYGPK (608 aa). Positions 786–950 constitute an SF3 helicase domain; that stretch reads LEKIHTQSVR…PEYSPMGMEL (165 aa). 813–820 is a binding site for ATP; that stretch reads GPSHCGKS. The helical transmembrane segment at 1196-1216 threads the bilayer; sequence IFPILMGFVCVVFACYGFIMP. The Lumenal segment spans residues 1217 to 1243; the sequence is LLSFASGGSAVGGMVAMEQIAAASVVS. Residues 1269–1482 enclose the Peptidase C3 domain; that stretch reads GASAEDAYAY…GLLPSALHMT (214 aa). Active-site for picornain 3C-like protease activity residues include H1309, E1348, and C1444. A RdRp catalytic domain is found at 1762–1900; it reads SVAYNCDYSK…AVDPSMQKIF (139 aa).

The protein belongs to the nepoviruses RNA1 polyprotein family. Specific enzymatic cleavages by picornain 3C-like protease in vivo yield mature proteins. Picornain 3C-like protease is autocatalytically processed. In terms of processing, VPg is uridylylated by the polymerase and is covalently linked to the 5'-end of genomic RNA. This uridylylated form acts as a nucleotide-peptide primer for the polymerase.

It localises to the host endoplasmic reticulum lumen. The protein localises to the host endoplasmic reticulum membrane. It catalyses the reaction RNA(n) + a ribonucleoside 5'-triphosphate = RNA(n+1) + diphosphate. Picornain 3C-like protease is a thiol protease that cleaves the P1 and P2 polyproteins. In Tobacco ringspot virus (TobRV), this protein is RNA1 polyprotein.